The chain runs to 473 residues: Mitochondrial adenyl nucleotide antiporter SLC25A24-A (473 aa).

Positions 1–173 (MLEQVQKFLL…RFWKHSTVLD (173 aa)) are regulatory N-terminal domain. The Mitochondrial intermembrane segment spans residues 1-197 (MLEQVQKFLL…EKKTGQWWKH (197 aa)). 4 EF-hand domains span residues 19 to 54 (DSHT…MGMA), 55 to 88 (VGKG…EEHE), 86 to 121 (EHEK…LGIN), and 122 to 157 (ISLD…NPAD). Residues D32, N34, D36, K38, E43, D68, N70, D72, H74, E79, D99, N101, D103, K105, E110, D135, D137, T139, T141, and E146 each contribute to the Ca(2+) site. The tract at residues 159–168 (IQQIIRFWKH) is linker region. The C-terminal transmembrane transporter domain stretch occupies residues 174 to 473 (IGDSLTIPDE…YEKMKIQLGI (300 aa)). Solcar repeat units lie at residues 192 to 277 (GQWW…YKKL), 285 to 370 (LGTA…LKNY), and 382 to 470 (PGVL…MKIQ). The chain crosses the membrane as a helical span at residues 198 to 215 (LLAGGMAGAVSRTGTAPL). Topologically, residues 216-251 (DRLKVMMQVHGTKGNSNIITGLKQMVKEGGVRSLWR) are mitochondrial matrix. The chain crosses the membrane as a helical span at residues 252-271 (GNGVNVIKIAPETAMKFWAY). At 272-294 (EQYKKLFTSESGKLGTAERFIAG) the chain is on the mitochondrial intermembrane side. Residues 295-308 (SLAGATAQTSIYPM) form a helical membrane-spanning segment. At 309 to 344 (EVLKTRLAVGKTGQYSGMFDCAKKIMQKEGILAFYK) the chain is on the mitochondrial matrix side. A helical transmembrane segment spans residues 345–364 (GYIPNILGIIPYAGIDLAIY). At 365–387 (ETLKNYWLQNYAKDSANPGVLVL) the chain is on the mitochondrial intermembrane side. A helical membrane pass occupies residues 388–405 (LGCGTVSSTCGQLASYPL). The Mitochondrial matrix portion of the chain corresponds to 406-444 (ALIRTRMQAQASIEGAPQLNMGGLFRKIVAKEGFFGLYT). Residues 445 to 464 (GIAPNFLKVLPAVSISYVVY) traverse the membrane as a helical segment. The Mitochondrial intermembrane segment spans residues 465–473 (EKMKIQLGI).

Belongs to the mitochondrial carrier (TC 2.A.29) family. Monomer.

The protein localises to the mitochondrion inner membrane. It catalyses the reaction Mg(2+)(out) + phosphate(in) + ATP(out) = Mg(2+)(in) + phosphate(out) + ATP(in). The catalysed reaction is ADP(out) + phosphate(in) + H(+)(out) = ADP(in) + phosphate(out) + H(+)(in). The enzyme catalyses AMP(out) + phosphate(in) = AMP(in) + phosphate(out). It carries out the reaction phosphate(in) + ATP(out) + 2 H(+)(out) = phosphate(out) + ATP(in) + 2 H(+)(in). It catalyses the reaction dADP(in) + ADP(out) = dADP(out) + ADP(in). The catalysed reaction is Mg(2+)(in) + ADP(out) + ATP(in) + H(+)(out) = Mg(2+)(out) + ADP(in) + ATP(out) + H(+)(in). The enzyme catalyses ADP(out) + diphosphate(in) = ADP(in) + diphosphate(out). It carries out the reaction dAMP(in) + ADP(out) + H(+)(out) = dAMP(out) + ADP(in) + H(+)(in). It catalyses the reaction 3'-AMP(in) + ADP(out) + H(+)(out) = 3'-AMP(out) + ADP(in) + H(+)(in). The catalysed reaction is dAMP(out) + phosphate(in) = dAMP(in) + phosphate(out). The enzyme catalyses 3'-AMP(out) + phosphate(in) = 3'-AMP(in) + phosphate(out). It carries out the reaction dADP(out) + phosphate(in) + H(+)(out) = dADP(in) + phosphate(out) + H(+)(in). Activated by an increase in cytosolic calcium levels that induce a conformational change of the N-terminal regulatory domain, uncapping the channel and allowing transport. Inhibited by bathophenanthroline, mersalyl, p-hydroxymercuribenzoate, bromcresol purple and tannic acid. Electroneutral antiporter that mediates the transport of adenyl nucleotides through the inner mitochondrial membrane. Originally identified as an ATP-magnesium/inorganic phosphate antiporter, it also acts as a broad specificity adenyl nucleotide antiporter. By regulating the mitochondrial matrix adenyl nucleotide pool could adapt to changing cellular energetic demands and indirectly regulate adenyl nucleotide-dependent metabolic pathways. The protein is Mitochondrial adenyl nucleotide antiporter SLC25A24-A (slc25a24-a) of Xenopus laevis (African clawed frog).